Reading from the N-terminus, the 469-residue chain is Glutamate--tRNA ligase (469 aa).

The short motif at 9–19 (PSPTGFLHVGG) is the 'HIGH' region element. Residues Cys-98, Cys-100, Cys-125, and Asp-127 each coordinate Zn(2+). The 'KMSKS' region motif lies at 236 to 240 (KLSKR). Lys-239 is a binding site for ATP.

The protein belongs to the class-I aminoacyl-tRNA synthetase family. Glutamate--tRNA ligase type 1 subfamily. As to quaternary structure, monomer. Zn(2+) is required as a cofactor.

It is found in the cytoplasm. The catalysed reaction is tRNA(Glu) + L-glutamate + ATP = L-glutamyl-tRNA(Glu) + AMP + diphosphate. Its function is as follows. Catalyzes the attachment of glutamate to tRNA(Glu) in a two-step reaction: glutamate is first activated by ATP to form Glu-AMP and then transferred to the acceptor end of tRNA(Glu). The polypeptide is Glutamate--tRNA ligase (Shewanella sp. (strain W3-18-1)).